Here is a 148-residue protein sequence, read N- to C-terminus: Leghemoglobin-1 (148 aa).

The 145-residue stretch at 2 to 146 (GFTDKQEALV…LATAIKKAMK (145 aa)) folds into the Globin domain. Nitrated tyrosine is present on residues tyrosine 24 and tyrosine 29. Serine 44 serves as a coordination point for heme b. Phosphoserine is present on serine 44. Histidine 61 is a binding site for O2. Heme b-binding residues include histidine 93 and lysine 96. The residue at position 134 (tyrosine 134) is a Nitrated tyrosine.

This sequence belongs to the plant globin family. Monomer. Nitrated in effective nodules and particularly in hypoxic conditions; this mechanism may play a protective role in the symbiosis by buffering toxic peroxynitrite NO(2)(-). Nitration level decrease during nodule senescence. In terms of processing, phosphorylation at Ser-44 disrupts the molecular environment of its porphyrin ring oxygen binding pocket, thus leading to a reduced oxygen consumption and to the delivery of oxygen O(2) to symbiosomes. As to expression, root nodules.

The protein localises to the cytoplasm. It is found in the cytosol. It localises to the nucleus. In terms of biological role, leghemoglobin that reversibly binds oxygen O(2) through a pentacoordinated heme iron. In root nodules, facilitates the diffusion of oxygen to the bacteroids while preventing the bacterial nitrogenase from being inactivated by buffering dioxygen, nitric oxide and carbon monoxide, and promoting the formation of reactive oxygen species (ROS, e.g. H(2)O(2)). This role is essential for symbiotic nitrogen fixation (SNF). In Pisum sativum (Garden pea), this protein is Leghemoglobin-1.